The primary structure comprises 797 residues: Striatin-3 (797 aa).

Met1 is modified (N-acetylmethionine). Gly residues-rich tracts occupy residues 1 to 12 and 33 to 43; these read MDELAGGGGGGP and GGNGAAGGGGP. The disordered stretch occupies residues 1 to 60; that stretch reads MDELAGGGGGGPAMASPPRQQQGPGGNMSLSPGGNGAAGGGGPPATEGAGPAAGPELSRP. Residues 44 to 55 show a composition bias toward low complexity; it reads PATEGAGPAAGP. The interval 71 to 79 is caveolin-binding; the sequence is YIQHEWARF. The stretch at 77–136 forms a coiled coil; the sequence is ARFEMERAHWEVERAELQARIAFLQGERKGQENLKKDLVRRIKMLEYALKQERAKYHKLK. Thr150 is modified (phosphothreonine). A calmodulin-binding region spans residues 166–183; that stretch reads QNSQLTWKQGRQLLRQYL. Phosphoserine occurs at positions 202, 214, 229, 257, and 335. A disordered region spans residues 313 to 336; sequence DGEGAGEARSSGDGTEWDKDDLSP. WD repeat units lie at residues 478–517, 531–570, 584–623, 679–718, 721–760, and 767–796; these read SHFDGVRALAFHPVEPVLVTASEDHTLKLWNLQKTVPAKK, AHIGPVLSLAISSNGEQCFSGGTDATIQWWNMPSPNVDPY, AHTDAVWGLAYSGIKNQLLSCSADGTVRLWNPQEKLPCIC, QSSNHINRVVSHPTLPVTITAHEDRHIKFFDNKTGKMIHS, AHLDAVTSLAVDPNGIYLMSGSHDCSIRLWNLDSKTCVQE, and KLDESIYDVAFHPSKAYIASAGADALAKVF.

Belongs to the WD repeat striatin family. As to quaternary structure, tetramerizes. Part of the core of STRIPAK complexes composed of PP2A catalytic and scaffolding subunits, the striatins (PP2A regulatory subunits), the striatin-associated proteins MOB4, STRIP1 and STRIP2, PDCD10 and members of the STE20 kinases, such as STK24 and STK26. The STRIPAK complex can be extended by adapter proteins such as SLMAP:SIKE1 or CTTNBP2NL. Interacts with CDC42BPB.

It localises to the cytoplasm. The protein resides in the membrane. Functionally, calmodulin-binding scaffolding protein which is the center of the striatin-interacting phosphatase and kinase (STRIPAK) complexes. STRIPAK complexes have critical roles in protein (de)phosphorylation and are regulators of multiple signaling pathways including Hippo, MAPK, nuclear receptor and cytoskeleton remodeling. Different types of STRIPAK complexes are involved in a variety of biological processes such as cell growth, differentiation, apoptosis, metabolism and immune regulation. In Bos taurus (Bovine), this protein is Striatin-3 (STRN3).